Here is a 61-residue protein sequence, read N- to C-terminus: UPF0434 protein PSPA7_2181 (61 aa).

Belongs to the UPF0434 family.

This Pseudomonas paraeruginosa (strain DSM 24068 / PA7) (Pseudomonas aeruginosa (strain PA7)) protein is UPF0434 protein PSPA7_2181.